We begin with the raw amino-acid sequence, 151 residues long: Transcriptional repressor NrdR (151 aa).

A zinc finger spans residues 3-34; sequence CPYCGYGESKVVDSRATDDKMAIRRRRECLKC. An ATP-cone domain is found at 49–139; it reads LLVIKKNMSR…VYRQFKDINT (91 aa).

The protein belongs to the NrdR family. Zn(2+) is required as a cofactor.

Functionally, negatively regulates transcription of bacterial ribonucleotide reductase nrd genes and operons by binding to NrdR-boxes. The polypeptide is Transcriptional repressor NrdR (Clostridium kluyveri (strain NBRC 12016)).